The following is a 267-amino-acid chain: L-aspartate dehydrogenase 2 (267 aa).

The NAD(+) site is built by Ala123 and Asn189. His219 is a catalytic residue.

This sequence belongs to the L-aspartate dehydrogenase family.

It carries out the reaction L-aspartate + NADP(+) + H2O = oxaloacetate + NH4(+) + NADPH + H(+). The enzyme catalyses L-aspartate + NAD(+) + H2O = oxaloacetate + NH4(+) + NADH + H(+). The protein operates within cofactor biosynthesis; NAD(+) biosynthesis; iminoaspartate from L-aspartate (dehydrogenase route): step 1/1. Specifically catalyzes the NAD or NADP-dependent dehydrogenation of L-aspartate to iminoaspartate. The polypeptide is L-aspartate dehydrogenase 2 (Bordetella bronchiseptica (strain ATCC BAA-588 / NCTC 13252 / RB50) (Alcaligenes bronchisepticus)).